We begin with the raw amino-acid sequence, 76 residues long: Putative snRNP Sm-like protein (76 aa).

A Sm domain is found at 4–76; the sequence is RPLDVIHRSL…VLAISPVDIE (73 aa).

Belongs to the snRNP Sm proteins family.

The polypeptide is Putative snRNP Sm-like protein (Thermococcus gammatolerans (strain DSM 15229 / JCM 11827 / EJ3)).